We begin with the raw amino-acid sequence, 1312 residues long: Multidrug resistance protein 3 (1312 aa).

A helical transmembrane segment spans residues 51–71 (GFIDYILLIGGIIGAMAAGVL). The 311-residue stretch at 59 to 369 (IGGIIGAMAA…VAMPINALST (311 aa)) folds into the ABC transmembrane type-1 1 domain. N-linked (GlcNAc...) asparagine glycosylation is present at Asn98. Transmembrane regions (helical) follow at residues 127–147 (IYFA…FFVL), 197–217 (KFGV…IGFS), 224–244 (LVIM…GFFA), 302–322 (VVGV…ALGS), and 344–364 (MVVF…AMPI). In terms of domain architecture, ABC transporter 1 spans 404 to 643 (IKLEDVQFRY…KATYYGLVKR (240 aa)). 439–446 (GASGCGKS) lines the ATP pocket. One can recognise an ABC transmembrane type-1 2 domain in the interval 724-1033 (LLSFLGLIGG…LGQMIPDVGK (310 aa)). 2 consecutive transmembrane segments (helical) span residues 725–745 (LSFL…FYMI) and 776–796 (IWIL…LGLF). An N-linked (GlcNAc...) asparagine glycan is attached at Asn819. Helical transmembrane passes span 852–872 (VGNV…AFYY), 874–894 (WKVA…VFLN), and 958–978 (AFVS…SFYI). The region spanning 1068-1307 (IEFKDICFRY…KGFYYTLAMQ (240 aa)) is the ABC transporter 2 domain. 1103-1110 (GASGCGKS) is an ATP binding site.

It belongs to the ABC transporter superfamily. ABCB family. Multidrug resistance exporter (TC 3.A.1.201) subfamily.

It is found in the membrane. It carries out the reaction ATP + H2O + xenobioticSide 1 = ADP + phosphate + xenobioticSide 2.. Functionally, energy-dependent efflux pump responsible for decreased drug accumulation in multidrug resistance parasites. In Entamoeba histolytica (strain ATCC 30459 / HM-1:IMSS / ABRM), this protein is Multidrug resistance protein 3.